The following is a 175-amino-acid chain: Apoptosis regulator Bcl-2 homolog (175 aa).

Residues 75–94 (QVLEDKINWGRIITIIAFCA) carry the BH1 motif. The short motif at 105-120 (SPQYYDGIISEAITDA) is the BH2 element.

This sequence belongs to the Bcl-2 family. Interacts with host BAX; this interaction inhibits BAX oligomerization and subsequent activation. Interacts with host BAK1.

It localises to the host mitochondrion. In terms of biological role, plays a role in the inhibition of host apoptosis by sequestering and inactivating multiple proapoptotic BCL-2 proteins, including BAK1 and BAX. The polypeptide is Apoptosis regulator Bcl-2 homolog (Vertebrata (FPV)).